A 273-amino-acid chain; its full sequence is Ribosomal RNA small subunit methyltransferase A (273 aa).

6 residues coordinate S-adenosyl-L-methionine: Asn-18, Leu-20, Gly-45, Glu-66, Asp-91, and Asn-113.

This sequence belongs to the class I-like SAM-binding methyltransferase superfamily. rRNA adenine N(6)-methyltransferase family. RsmA subfamily.

Its subcellular location is the cytoplasm. It catalyses the reaction adenosine(1518)/adenosine(1519) in 16S rRNA + 4 S-adenosyl-L-methionine = N(6)-dimethyladenosine(1518)/N(6)-dimethyladenosine(1519) in 16S rRNA + 4 S-adenosyl-L-homocysteine + 4 H(+). Specifically dimethylates two adjacent adenosines (A1518 and A1519) in the loop of a conserved hairpin near the 3'-end of 16S rRNA in the 30S particle. May play a critical role in biogenesis of 30S subunits. The chain is Ribosomal RNA small subunit methyltransferase A from Salmonella choleraesuis (strain SC-B67).